A 459-amino-acid chain; its full sequence is Cysteine--tRNA ligase (459 aa).

Cys31 provides a ligand contact to Zn(2+). Positions Pro33–Asn43 match the 'HIGH' region motif. 3 residues coordinate Zn(2+): Cys216, His241, and Glu245. Residues Lys274 to Ser278 carry the 'KMSKS' region motif. Residue Lys277 participates in ATP binding.

The protein belongs to the class-I aminoacyl-tRNA synthetase family. In terms of assembly, monomer. Zn(2+) serves as cofactor.

The protein localises to the cytoplasm. It carries out the reaction tRNA(Cys) + L-cysteine + ATP = L-cysteinyl-tRNA(Cys) + AMP + diphosphate. This Rickettsia peacockii (strain Rustic) protein is Cysteine--tRNA ligase.